The following is a 335-amino-acid chain: MEAKIDELINNDPVWSSQNESLISKPYNHILLKPGKNFRLNLIVQINRVMNLPKDQLAIVSQIVELLHNSSLLIDDIEDNAPLRRGQTTSHLIFGVPSTINTANYMYFRAMQLVSQLTTKEPLYHNLITIFNEELINLHRGQGLDIYWRDFLPEIIPTQEMYLNMVMNKTGGLFRLTLRLMEALSPSSHHGHSLVPFINLLGIIYQIRDDYLNLKDFQMSSEKGFAEDITEGKLSFPIVHALNFTKTKGQTEQHNEILRILLLRTSDKDIKLKLIQILEFDTNSLAYTKNFINQLVNMIKNDNENKYLPDLASHSDTATNLHDELLYIIDHLSEL.

The isopentenyl diphosphate site is built by Lys36, Arg39, and His68. Residues Asp75 and Asp79 each contribute to the Mg(2+) site. Arg84 is a binding site for dimethylallyl diphosphate. Arg85 provides a ligand contact to isopentenyl diphosphate. Dimethylallyl diphosphate is bound by residues Lys169, Thr170, Gln206, Asn213, Lys223, and Lys233.

Belongs to the FPP/GGPP synthase family. Mg(2+) is required as a cofactor.

The protein localises to the cytoplasm. It catalyses the reaction isopentenyl diphosphate + dimethylallyl diphosphate = (2E)-geranyl diphosphate + diphosphate. The catalysed reaction is isopentenyl diphosphate + (2E)-geranyl diphosphate = (2E,6E)-farnesyl diphosphate + diphosphate. The enzyme catalyses isopentenyl diphosphate + (2E,6E)-farnesyl diphosphate = (2E,6E,10E)-geranylgeranyl diphosphate + diphosphate. Its pathway is isoprenoid biosynthesis; farnesyl diphosphate biosynthesis; farnesyl diphosphate from geranyl diphosphate and isopentenyl diphosphate: step 1/1. It participates in isoprenoid biosynthesis; geranyl diphosphate biosynthesis; geranyl diphosphate from dimethylallyl diphosphate and isopentenyl diphosphate: step 1/1. The protein operates within isoprenoid biosynthesis; geranylgeranyl diphosphate biosynthesis; geranylgeranyl diphosphate from farnesyl diphosphate and isopentenyl diphosphate: step 1/1. Functionally, catalyzes the trans-addition of the 3 molecules of IPP onto DMAPP to form geranylgeranyl pyrophosphate. Required for the membrane attachment of YPT1 and SEC4. May be involved in vesicle trafficking and protein sorting. This chain is Geranylgeranyl pyrophosphate synthase BTS1 (BTS1), found in Saccharomyces cerevisiae (strain ATCC 204508 / S288c) (Baker's yeast).